Here is a 266-residue protein sequence, read N- to C-terminus: Zinc transporter ZupT (266 aa).

8 helical membrane-spanning segments follow: residues Leu8–Val28, Phe35–Leu55, Gln70–Ile90, Gly123–Phe143, Gly152–Val172, Phe185–Ile205, Trp209–Ile229, and Leu246–Ala266. Fe(2+)-binding residues include Asn134 and Glu137. Residues Glu137 and His162 each contribute to the Zn(2+) site. Fe(2+) is bound by residues Asn163, Glu166, and Glu195. Glu166 contacts Zn(2+).

This sequence belongs to the ZIP transporter (TC 2.A.5) family. ZupT subfamily.

It localises to the cell membrane. It carries out the reaction Zn(2+)(in) = Zn(2+)(out). Its function is as follows. Mediates zinc uptake. May also transport other divalent cations. The chain is Zinc transporter ZupT from Chlorobium phaeovibrioides (strain DSM 265 / 1930) (Prosthecochloris vibrioformis (strain DSM 265)).